Consider the following 386-residue polypeptide: F420 non-reducing hydrogenase II small subunit (386 aa).

Positions 1–51 (MVEMSTGMKNLTRTLESMDFLKMDRRTFMKAVSALGATAFLGTYQTEIVNA) form a signal peptide, tat-type signal. [4Fe-4S] cluster contacts are provided by Cys67, Cys70, Cys178, Cys227, His273, Cys276, Cys296, and Cys302. 3 residues coordinate [3Fe-4S] cluster: Cys311, Cys330, and Cys333.

It belongs to the [NiFe]/[NiFeSe] hydrogenase small subunit family. In terms of assembly, composed of a large subunit (VhtA), a small subunit (VhtG) and a cytochrome subunit (VhtC). It depends on [4Fe-4S] cluster as a cofactor. [3Fe-4S] cluster serves as cofactor. Predicted to be exported by the Tat system. The position of the signal peptide cleavage has not been experimentally proven.

The protein resides in the cell membrane. The enzyme catalyses methanophenazine + H2 = dihydromethanophenazine. Part of the F420 non-reducing hydrogenase II complex that catalyzes the reduction of methanophenazine to dihydromethanophenazine. The chain is F420 non-reducing hydrogenase II small subunit from Methanosarcina mazei (strain ATCC BAA-159 / DSM 3647 / Goe1 / Go1 / JCM 11833 / OCM 88) (Methanosarcina frisia).